The chain runs to 203 residues: Small ribosomal subunit protein uS4 (203 aa).

The interval 22-45 (TGKELARRPYKPGQHGPNSRGKVS) is disordered. Positions 93–156 (QRLDNVVYRL…QNISTIKEAV (64 aa)) constitute an S4 RNA-binding domain.

Belongs to the universal ribosomal protein uS4 family. In terms of assembly, part of the 30S ribosomal subunit. Contacts protein S5. The interaction surface between S4 and S5 is involved in control of translational fidelity.

In terms of biological role, one of the primary rRNA binding proteins, it binds directly to 16S rRNA where it nucleates assembly of the body of the 30S subunit. Its function is as follows. With S5 and S12 plays an important role in translational accuracy. This chain is Small ribosomal subunit protein uS4, found in Enterococcus faecalis (strain ATCC 700802 / V583).